Consider the following 217-residue polypeptide: Phosphatidylserine decarboxylase proenzyme (217 aa).

Serine 182 functions as the Schiff-base intermediate with substrate; via pyruvic acid in the catalytic mechanism. At serine 182 the chain carries Pyruvic acid (Ser); by autocatalysis.

The protein belongs to the phosphatidylserine decarboxylase family. PSD-A subfamily. In terms of assembly, heterodimer of a large membrane-associated beta subunit and a small pyruvoyl-containing alpha subunit. The cofactor is pyruvate. Post-translationally, is synthesized initially as an inactive proenzyme. Formation of the active enzyme involves a self-maturation process in which the active site pyruvoyl group is generated from an internal serine residue via an autocatalytic post-translational modification. Two non-identical subunits are generated from the proenzyme in this reaction, and the pyruvate is formed at the N-terminus of the alpha chain, which is derived from the carboxyl end of the proenzyme. The post-translation cleavage follows an unusual pathway, termed non-hydrolytic serinolysis, in which the side chain hydroxyl group of the serine supplies its oxygen atom to form the C-terminus of the beta chain, while the remainder of the serine residue undergoes an oxidative deamination to produce ammonia and the pyruvoyl prosthetic group on the alpha chain.

It localises to the cell membrane. The catalysed reaction is a 1,2-diacyl-sn-glycero-3-phospho-L-serine + H(+) = a 1,2-diacyl-sn-glycero-3-phosphoethanolamine + CO2. It participates in phospholipid metabolism; phosphatidylethanolamine biosynthesis; phosphatidylethanolamine from CDP-diacylglycerol: step 2/2. Its function is as follows. Catalyzes the formation of phosphatidylethanolamine (PtdEtn) from phosphatidylserine (PtdSer). The chain is Phosphatidylserine decarboxylase proenzyme from Nitratidesulfovibrio vulgaris (strain ATCC 29579 / DSM 644 / CCUG 34227 / NCIMB 8303 / VKM B-1760 / Hildenborough) (Desulfovibrio vulgaris).